Here is a 204-residue protein sequence, read N- to C-terminus: Holliday junction branch migration complex subunit RuvA (204 aa).

Positions 1 to 64 are domain I; it reads MIGRVTGILV…EDAHLLFGFS (64 aa). The tract at residues 65-143 is domain II; the sequence is HKQDRSLFRE…GLQQTDFFIK (79 aa). Positions 144-155 are flexible linker; sequence SSHLPGIKCSKL. The interval 156-204 is domain III; it reads DQSLQLDEAVSALIALGYKPIEAEKMVKKVLKADLTSEQLIREALKAAL.

It belongs to the RuvA family. Homotetramer. Forms an RuvA(8)-RuvB(12)-Holliday junction (HJ) complex. HJ DNA is sandwiched between 2 RuvA tetramers; dsDNA enters through RuvA and exits via RuvB. An RuvB hexamer assembles on each DNA strand where it exits the tetramer. Each RuvB hexamer is contacted by two RuvA subunits (via domain III) on 2 adjacent RuvB subunits; this complex drives branch migration. In the full resolvosome a probable DNA-RuvA(4)-RuvB(12)-RuvC(2) complex forms which resolves the HJ.

It localises to the cytoplasm. The RuvA-RuvB-RuvC complex processes Holliday junction (HJ) DNA during genetic recombination and DNA repair, while the RuvA-RuvB complex plays an important role in the rescue of blocked DNA replication forks via replication fork reversal (RFR). RuvA specifically binds to HJ cruciform DNA, conferring on it an open structure. The RuvB hexamer acts as an ATP-dependent pump, pulling dsDNA into and through the RuvAB complex. HJ branch migration allows RuvC to scan DNA until it finds its consensus sequence, where it cleaves and resolves the cruciform DNA. The sequence is that of Holliday junction branch migration complex subunit RuvA from Histophilus somni (strain 2336) (Haemophilus somnus).